Here is a 522-residue protein sequence, read N- to C-terminus: MAFLDNPTIILAHIRQSHVTSDDTGMCEMVLIDHDVDLEKIHPPSMPGDSGSEIQGSNGETQGYVYAQSVDITSSWDFGIRRRSNTAQRLERLRKERQNQIKCKNIQWKERNSKQSAQELKSLFEKKSLKEKPPNSGKQSILSVRLEQCPLQLNNPFNEYSKFDGKGHVGTTATKKIDVYLPLHSSQDRLLPMTVVTMASARVQDLIGLICWQYTSEGREPKLNDNVSAYCLHIAEDDGEVDTDFPPLDSNEPIHKFGFSTLALVEKYSSPGLTSKESLFVRINAAHGFSLIQVDNTKVTMKEILLKAVKRRKGSQKISGPQYRLEKQSEPNVAVDLESTLESQSAWEFCLVRENSSRADGVFEEDSQIDIATVQDMLSSHHYKSFKVSMIHRLRFTTDVQLGISGDKVEIDPVTSQKASTKFWIKQKPISIDSDLLCACDLAEEKSPSHAIFKLTYLSNHDYKHLYFESDAATVNEIVLKVNYILESRASTARADYFAQKQRKLNRRTSFSFQKEKKSGQQ.

Residue A2 is modified to N-acetylalanine. The tract at residues 2 to 184 (AFLDNPTIIL…KKIDVYLPLH (183 aa)) is interaction with MAP3K2. Residues 2–267 (AFLDNPTIIL…GFSTLALVEK (266 aa)) form an interaction with NBN region. Residue T86 is modified to Phosphothreonine. Residues S128, S186, S315, and S356 each carry the phosphoserine modification. The CRIM domain maps to 139-267 (QSILSVRLEQ…GFSTLALVEK (129 aa)). Residues 279–353 (LFVRINAAHG…QSAWEFCLVR (75 aa)) are SIN1-type RBD. The 106-residue stretch at 382 to 487 (HYKSFKVSMI…IVLKVNYILE (106 aa)) folds into the SIN1-type PH domain. R393 serves as a coordination point for a 1,2-diacyl-sn-glycero-3-phospho-(1D-myo-inositol-3,4,5-trisphosphate). T398 is subject to Phosphothreonine. Residues K428 and K464 each coordinate a 1,2-diacyl-sn-glycero-3-phospho-(1D-myo-inositol-3,4,5-trisphosphate). An interaction with ATF2 region spans residues 468–522 (FESDAATVNEIVLKVNYILESRASTARADYFAQKQRKLNRRTSFSFQKEKKSGQQ). Phosphoserine is present on S510.

This sequence belongs to the SIN1 family. As to quaternary structure, component of the mechanistic target of rapamycin complex 2 (mTORC2), consisting in two heterotretramers composed of MTOR, MLST8, RICTOR and MAPKAP1/SIN1. The mTORC2 core complex associates with PRR5/PROTOR1 and/or PRR5L/PROTOR2. Contrary to mTORC1, mTORC2 does not bind to and is not sensitive to FKBP12-rapamycin. Interacts with MAP3K2. Interacts with ATF2. Interacts with MAPK8. Interacts with GTP-bound HRAS and KRAS; inhibiting their activity. Interacts with IFNAR2. Phosphorylation at Ser-128 by PKC promotes relocalization to the perinuclear region, where the mTORC2 complex specifically mediates phosphorylation of SGK1. Phosphorylated at Thr-86 by AKT1 or RPS6KB1 in the presence of growth factors; the effect of this phosphorylation is however unclear. According to two studies, phosphorylation at Thr-86 by AKT1 is part of a positive feedback loop that increases mTORC2 activation. According to another study, phosphorylation at Thr-86 and Thr-398 by RPS6KB1 promotes dissociation from the mTORC2 complex, leading to inhibit mTORC2 signaling.

It is found in the cell membrane. It localises to the endoplasmic reticulum membrane. The protein localises to the early endosome membrane. Its subcellular location is the late endosome membrane. The protein resides in the lysosome membrane. It is found in the golgi apparatus membrane. It localises to the mitochondrion outer membrane. The protein localises to the cytoplasm. Its subcellular location is the perinuclear region. The protein resides in the nucleus. Phosphatidylinositol 3,4,5-trisphosphate (PI(3,4,5)P3) promotes MTOR activation by relieving MAPKAP1/SIN1-mediated inhibition of MTOR that takes place in absence of PI(3,4,5)P3. Functionally, component of the mechanistic target of rapamycin complex 2 (mTORC2), which transduces signals from growth factors to pathways involved in proliferation, cytoskeletal organization, lipogenesis and anabolic output. In response to growth factors, mTORC2 phosphorylates and activates AGC protein kinase family members, including AKT (AKT1, AKT2 and AKT3), PKC (PRKCA, PRKCB and PRKCE) and SGK1. In contrast to mTORC1, mTORC2 is nutrient-insensitive. Within the mTORC2 complex, MAPKAP1/SIN1 acts as a substrate adapter which recognizes and binds AGC protein kinase family members for phosphorylation by MTOR. mTORC2 plays a critical role in AKT1 activation by mediating phosphorylation of different sites depending on the context, such as 'Thr-450', 'Ser-473', 'Ser-477' or 'Thr-479', facilitating the phosphorylation of the activation loop of AKT1 on 'Thr-308' by PDPK1/PDK1 which is a prerequisite for full activation. mTORC2 catalyzes the phosphorylation of SGK1 at 'Ser-422' and of PRKCA on 'Ser-657'. The mTORC2 complex also phosphorylates various proteins involved in insulin signaling, such as FBXW8 and IGF2BP1. mTORC2 acts upstream of Rho GTPases to regulate the actin cytoskeleton, probably by activating one or more Rho-type guanine nucleotide exchange factors. mTORC2 promotes the serum-induced formation of stress-fibers or F-actin. MAPKAP1 inhibits MAP3K2 by preventing its dimerization and autophosphorylation. Inhibits HRAS and KRAS independently of mTORC2 complex. Enhances osmotic stress-induced phosphorylation of ATF2 and ATF2-mediated transcription. Involved in ciliogenesis, regulates cilia length through its interaction with CCDC28B independently of mTORC2 complex. The chain is Target of rapamycin complex 2 subunit MAPKAP1 (MAPKAP1) from Bos taurus (Bovine).